A 258-amino-acid chain; its full sequence is Hemin import ATP-binding protein HmuV (258 aa).

The region spanning 1-238 (MLDIDVSNLS…DILERTYRTP (238 aa)) is the ABC transporter domain. 34–41 (GENGAGKS) serves as a coordination point for ATP.

The protein belongs to the ABC transporter superfamily. Heme (hemin) importer (TC 3.A.1.14.5) family. The complex is composed of two ATP-binding proteins (HmuV), two transmembrane proteins (HmuU) and a solute-binding protein (HmuT).

Its subcellular location is the cell inner membrane. In terms of biological role, part of the ABC transporter complex HmuTUV involved in hemin import. Responsible for energy coupling to the transport system. This is Hemin import ATP-binding protein HmuV from Idiomarina loihiensis (strain ATCC BAA-735 / DSM 15497 / L2-TR).